The chain runs to 435 residues: tRNA-2-methylthio-N(6)-dimethylallyladenosine synthase (435 aa).

The MTTase N-terminal domain occupies 1-117; that stretch reads MKYFIKTYGC…MPKLLEDVKV (117 aa). [4Fe-4S] cluster-binding residues include Cys10, Cys46, Cys80, Cys156, Cys160, and Cys163. The 229-residue stretch at 142-370 folds into the Radical SAM core domain; that stretch reads RDNSYCAYVT…LEIQKAITSK (229 aa). Residues 373-433 form the TRAM domain; it reads QRYKNTVQKV…FQSLDGVVQN (61 aa).

It belongs to the methylthiotransferase family. MiaB subfamily. In terms of assembly, monomer. [4Fe-4S] cluster is required as a cofactor.

The protein localises to the cytoplasm. The enzyme catalyses N(6)-dimethylallyladenosine(37) in tRNA + (sulfur carrier)-SH + AH2 + 2 S-adenosyl-L-methionine = 2-methylsulfanyl-N(6)-dimethylallyladenosine(37) in tRNA + (sulfur carrier)-H + 5'-deoxyadenosine + L-methionine + A + S-adenosyl-L-homocysteine + 2 H(+). Its function is as follows. Catalyzes the methylthiolation of N6-(dimethylallyl)adenosine (i(6)A), leading to the formation of 2-methylthio-N6-(dimethylallyl)adenosine (ms(2)i(6)A) at position 37 in tRNAs that read codons beginning with uridine. The polypeptide is tRNA-2-methylthio-N(6)-dimethylallyladenosine synthase (Hydrogenobaculum sp. (strain Y04AAS1)).